We begin with the raw amino-acid sequence, 417 residues long: RH-like protein ID (417 aa).

The next 11 helical transmembrane spans lie at 12-32 (CLPL…YFFT), 44-64 (LVAS…GFGF), 77-97 (VAFN…LDGF), 125-145 (ISAG…MVLV), 172-192 (IYVF…KPLA), 203-223 (TIPS…WPSF), 238-258 (VFNT…VSSL), 265-285 (INMT…ATSC), 287-307 (LIPS…ISIG), 331-351 (NFSL…VLDT), and 358-378 (MVGF…VIAL).

This sequence belongs to the ammonium transporter (TC 2.A.49) family. Rh subfamily.

It is found in the membrane. In terms of biological role, may be part of an oligomeric complex which is likely to have a transport or channel function in the erythrocyte membrane. The chain is RH-like protein ID from Gorilla gorilla gorilla (Western lowland gorilla).